The sequence spans 248 residues: Tryptophan synthase alpha chain (248 aa).

Residues Glu36 and Asp47 each act as proton acceptor in the active site.

This sequence belongs to the TrpA family. In terms of assembly, tetramer of two alpha and two beta chains.

The catalysed reaction is (1S,2R)-1-C-(indol-3-yl)glycerol 3-phosphate + L-serine = D-glyceraldehyde 3-phosphate + L-tryptophan + H2O. It functions in the pathway amino-acid biosynthesis; L-tryptophan biosynthesis; L-tryptophan from chorismate: step 5/5. The alpha subunit is responsible for the aldol cleavage of indoleglycerol phosphate to indole and glyceraldehyde 3-phosphate. This chain is Tryptophan synthase alpha chain, found in Pyrococcus abyssi (strain GE5 / Orsay).